Consider the following 63-residue polypeptide: Large ribosomal subunit protein uL30 (63 aa).

This sequence belongs to the universal ribosomal protein uL30 family. As to quaternary structure, part of the 50S ribosomal subunit.

This is Large ribosomal subunit protein uL30 from Rickettsia felis (strain ATCC VR-1525 / URRWXCal2) (Rickettsia azadi).